A 310-amino-acid polypeptide reads, in one-letter code: Phosphoribosylaminoimidazole-succinocarboxamide synthase (310 aa).

This sequence belongs to the SAICAR synthetase family.

It catalyses the reaction 5-amino-1-(5-phospho-D-ribosyl)imidazole-4-carboxylate + L-aspartate + ATP = (2S)-2-[5-amino-1-(5-phospho-beta-D-ribosyl)imidazole-4-carboxamido]succinate + ADP + phosphate + 2 H(+). It functions in the pathway purine metabolism; IMP biosynthesis via de novo pathway; 5-amino-1-(5-phospho-D-ribosyl)imidazole-4-carboxamide from 5-amino-1-(5-phospho-D-ribosyl)imidazole-4-carboxylate: step 1/2. This Xanthomonas oryzae pv. oryzae (strain MAFF 311018) protein is Phosphoribosylaminoimidazole-succinocarboxamide synthase.